We begin with the raw amino-acid sequence, 95 residues long: CRISPR-associated endoribonuclease Cas2 1 (95 aa).

Residue Asp-11 coordinates Mg(2+).

The protein belongs to the CRISPR-associated endoribonuclease Cas2 protein family. Homodimer, forms a heterotetramer with a Cas1 homodimer. Requires Mg(2+) as cofactor.

CRISPR (clustered regularly interspaced short palindromic repeat), is an adaptive immune system that provides protection against mobile genetic elements (viruses, transposable elements and conjugative plasmids). CRISPR clusters contain sequences complementary to antecedent mobile elements and target invading nucleic acids. CRISPR clusters are transcribed and processed into CRISPR RNA (crRNA). Functions as a ssRNA-specific endoribonuclease. Involved in the integration of spacer DNA into the CRISPR cassette. The protein is CRISPR-associated endoribonuclease Cas2 1 of Methanospirillum hungatei JF-1 (strain ATCC 27890 / DSM 864 / NBRC 100397 / JF-1).